We begin with the raw amino-acid sequence, 480 residues long: Aspartyl/glutamyl-tRNA(Asn/Gln) amidotransferase subunit B (480 aa).

This sequence belongs to the GatB/GatE family. GatB subfamily. As to quaternary structure, heterotrimer of A, B and C subunits.

It carries out the reaction L-glutamyl-tRNA(Gln) + L-glutamine + ATP + H2O = L-glutaminyl-tRNA(Gln) + L-glutamate + ADP + phosphate + H(+). It catalyses the reaction L-aspartyl-tRNA(Asn) + L-glutamine + ATP + H2O = L-asparaginyl-tRNA(Asn) + L-glutamate + ADP + phosphate + 2 H(+). Functionally, allows the formation of correctly charged Asn-tRNA(Asn) or Gln-tRNA(Gln) through the transamidation of misacylated Asp-tRNA(Asn) or Glu-tRNA(Gln) in organisms which lack either or both of asparaginyl-tRNA or glutaminyl-tRNA synthetases. The reaction takes place in the presence of glutamine and ATP through an activated phospho-Asp-tRNA(Asn) or phospho-Glu-tRNA(Gln). The polypeptide is Aspartyl/glutamyl-tRNA(Asn/Gln) amidotransferase subunit B (Streptococcus pneumoniae (strain Hungary19A-6)).